The primary structure comprises 202 residues: Large ribosomal subunit protein uL13 (202 aa).

The protein belongs to the universal ribosomal protein uL13 family.

The chain is Large ribosomal subunit protein uL13 from Caenorhabditis elegans.